A 447-amino-acid chain; its full sequence is Cobyrinate a,c-diamide synthase (447 aa).

Residues 247–435 (RIGVAIDEAF…IHIHAASCPQ (189 aa)) enclose the GATase cobBQ-type domain. Catalysis depends on C329, which acts as the Nucleophile.

Belongs to the CobB/CbiA family. Mg(2+) serves as cofactor.

The catalysed reaction is cob(II)yrinate + 2 L-glutamine + 2 ATP + 2 H2O = cob(II)yrinate a,c diamide + 2 L-glutamate + 2 ADP + 2 phosphate + 2 H(+). The enzyme catalyses Ni-sirohydrochlorin + 2 L-glutamine + 2 ATP + 2 H2O = Ni-sirohydrochlorin a,c-diamide + 2 L-glutamate + 2 ADP + 2 phosphate + 2 H(+). The protein operates within cofactor biosynthesis; adenosylcobalamin biosynthesis; cob(II)yrinate a,c-diamide from sirohydrochlorin (anaerobic route): step 10/10. Catalyzes the ATP-dependent amidation of the two carboxylate groups at positions a and c of cobyrinate, using either L-glutamine or ammonia as the nitrogen source. Involved in the biosynthesis of the unique nickel-containing tetrapyrrole coenzyme F430, the prosthetic group of methyl-coenzyme M reductase (MCR), which plays a key role in methanogenesis and anaerobic methane oxidation. Catalyzes the ATP-dependent amidation of the two carboxylate groups at positions a and c of Ni-sirohydrochlorin, using L-glutamine or ammonia as the nitrogen source. The polypeptide is Cobyrinate a,c-diamide synthase (Methanothermobacter thermautotrophicus (strain ATCC 29096 / DSM 1053 / JCM 10044 / NBRC 100330 / Delta H) (Methanobacterium thermoautotrophicum)).